A 159-amino-acid chain; its full sequence is Phosphopantetheine adenylyltransferase (159 aa).

Residue Thr-10 participates in substrate binding. Residues 10 to 11 (TF) and His-18 each bind ATP. Substrate-binding residues include Lys-42, Met-74, and Arg-88. ATP contacts are provided by residues 89 to 91 (GLR), Glu-99, and 124 to 130 (WSFISSS).

This sequence belongs to the bacterial CoaD family. As to quaternary structure, homohexamer. Mg(2+) serves as cofactor.

The protein resides in the cytoplasm. The enzyme catalyses (R)-4'-phosphopantetheine + ATP + H(+) = 3'-dephospho-CoA + diphosphate. It participates in cofactor biosynthesis; coenzyme A biosynthesis; CoA from (R)-pantothenate: step 4/5. Functionally, reversibly transfers an adenylyl group from ATP to 4'-phosphopantetheine, yielding dephospho-CoA (dPCoA) and pyrophosphate. This is Phosphopantetheine adenylyltransferase from Escherichia coli (strain SMS-3-5 / SECEC).